A 173-amino-acid polypeptide reads, in one-letter code: C-phycocyanin beta subunit (173 aa).

Asn73 is modified (N4-methylasparagine). The (2R,3E)-phycocyanobilin site is built by Cys83 and Cys154.

The protein belongs to the phycobiliprotein family. Heterodimer of an alpha and a beta subunit, which further assembles into trimers and the trimers into hexamers. Post-translationally, contains two covalently linked bilin chromophores.

Its subcellular location is the cellular thylakoid membrane. Light-harvesting photosynthetic bile pigment-protein from the phycobiliprotein complex (phycobilisome, PBS). Phycocyanin is the major phycobiliprotein in the PBS rod. This is C-phycocyanin beta subunit (cpcB1) from Synechococcus elongatus (strain ATCC 33912 / PCC 7942 / FACHB-805) (Anacystis nidulans R2).